Consider the following 245-residue polypeptide: 1-(5-phosphoribosyl)-5-[(5-phosphoribosylamino)methylideneamino] imidazole-4-carboxamide isomerase (245 aa).

Residue Asp7 is the Proton acceptor of the active site. Residue Asp129 is the Proton donor of the active site.

This sequence belongs to the HisA/HisF family.

The protein resides in the cytoplasm. The enzyme catalyses 1-(5-phospho-beta-D-ribosyl)-5-[(5-phospho-beta-D-ribosylamino)methylideneamino]imidazole-4-carboxamide = 5-[(5-phospho-1-deoxy-D-ribulos-1-ylimino)methylamino]-1-(5-phospho-beta-D-ribosyl)imidazole-4-carboxamide. It participates in amino-acid biosynthesis; L-histidine biosynthesis; L-histidine from 5-phospho-alpha-D-ribose 1-diphosphate: step 4/9. The sequence is that of 1-(5-phosphoribosyl)-5-[(5-phosphoribosylamino)methylideneamino] imidazole-4-carboxamide isomerase from Pectobacterium carotovorum subsp. carotovorum (strain PC1).